The sequence spans 699 residues: SPS-sensor serine protease component SSY5 (699 aa).

2 disordered regions span residues 1 to 113 and 129 to 158; these read MVRF…LQGF and VKEEESQDTQNTLDVSSSTSSTLATSGNAR. Residues 1–381 constitute a propeptide that is removed on maturation; sequence MVRFFGLNKK…YCVKDYIKKA (381 aa). Over residues 24-38 the composition is skewed to polar residues; the sequence is NEQNAAETSSSNVSG. A compositionally biased stretch (basic and acidic residues) spans 39-51; sequence NEERIDPNSHDAN. A compositionally biased stretch (low complexity) spans 52–78; the sequence is PENANNDDASTTFGSSIQSSSIFSRGR. Residues 83-93 show a composition bias toward polar residues; the sequence is TGASSSMATSE. Low complexity-rich tracts occupy residues 97 to 109 and 144 to 154; these read HSSGHSGSKNSKN and SSSTSSTLATS. Residues 459-699 form a serine protease region; it reads FAITCAHVVL…QWDIDPQLDG (241 aa). Residues histidine 465, aspartate 545, and serine 640 each act as charge relay system in the active site.

This sequence belongs to the peptidase S64 family. In terms of assembly, component of the plasma membrane SPS (SSY1-PTR3-SSY5) amino acid sensor complex. Post-translationally, the propeptide is autoproteolytically cleaved from the catalytic domain but remains associated, forming an inactive protease complex. This processing occurs even in the absence of signaling.

It is found in the cell membrane. Protease component of the SPS-sensor system, which regulates the expression of several amino acid-metabolizing enzymes and amino acid- and peptide-permeases in response to extracellular amino acid levels by controlling the activity of two transcription factors, STP1 and STP2. Catalyzes the activation of these transcription factors, which are synthesized as latent cytoplasmic precursors, by proteolytic removal of an N-terminal inhibitory domain containing cytoplasmic retention motifs. SSY5 binds as an inactive protease complex to STP1. In response to extracellular amino acids and dependent on the other SPS-sensor components, the inhibitory propeptide is induced to dissociate, and thereby enables the catalytic domain to process STP1. The polypeptide is SPS-sensor serine protease component SSY5 (SSY5) (Saccharomyces cerevisiae (strain YJM789) (Baker's yeast)).